Here is a 258-residue protein sequence, read N- to C-terminus: C1q-related factor (258 aa).

Residues 1–16 (MLLVLVVLIPVLVSSG) form the signal peptide. The segment at 39 to 120 (GPGAGARSDG…PGSGGSGAIS (82 aa)) is disordered. Positions 67–77 (GPQGKPGRTGK) are enriched in low complexity. The region spanning 67 to 115 (GPQGKPGRTGKPGPPGPPGDRGPPGPVGPPGEKGEPGKPGPPGLPGSGG) is the Collagen-like domain. Residues 78 to 95 (PGPPGPPGDRGPPGPVGP) are compositionally biased toward pro residues. Positions 125–258 (TTVPRVAFYA…TFSGFIIYSD (134 aa)) constitute a C1q domain.

Interacts with ADGRB3. Forms heterooligomers with C1QL4, when proteins are coexpressed; this interaction does not occur after secretion. Expressed in brainstem. More abundant in areas of the nervous system involved in motor function, such as the Purkinje cells of the cerebellum, the accessory olivary nucleus, the pons and the red nucleus.

The protein localises to the secreted. In terms of biological role, may regulate the number of excitatory synapses that are formed on hippocampus neurons. Has no effect on inhibitory synapses. This Mus musculus (Mouse) protein is C1q-related factor (C1ql1).